The sequence spans 424 residues: Adenylosuccinate synthetase (424 aa).

GTP is bound by residues 12–18 (GDEGKGK) and 40–42 (GHT). The Proton acceptor role is filled by Asp-13. Residues Asp-13 and Gly-40 each coordinate Mg(2+). Residues 13 to 16 (DEGK), 38 to 41 (NAGH), Thr-130, Arg-144, Asn-220, Thr-235, and Arg-299 contribute to the IMP site. The active-site Proton donor is His-41. A substrate-binding site is contributed by 295–301 (VTTGRRR). Residues Arg-301, 327-329 (KLD), and 412-414 (GTG) each bind GTP.

It belongs to the adenylosuccinate synthetase family. In terms of assembly, homodimer. Requires Mg(2+) as cofactor.

The protein resides in the cytoplasm. It carries out the reaction IMP + L-aspartate + GTP = N(6)-(1,2-dicarboxyethyl)-AMP + GDP + phosphate + 2 H(+). Its pathway is purine metabolism; AMP biosynthesis via de novo pathway; AMP from IMP: step 1/2. Plays an important role in the de novo pathway and in the salvage pathway of purine nucleotide biosynthesis. Catalyzes the first committed step in the biosynthesis of AMP from IMP. The sequence is that of Adenylosuccinate synthetase from Neosartorya fischeri (strain ATCC 1020 / DSM 3700 / CBS 544.65 / FGSC A1164 / JCM 1740 / NRRL 181 / WB 181) (Aspergillus fischerianus).